The sequence spans 89 residues: HssA/B-like protein 22 (89 aa).

This sequence belongs to the hssA/B family.

The sequence is that of HssA/B-like protein 22 (hssl22) from Dictyostelium discoideum (Social amoeba).